A 1173-amino-acid chain; its full sequence is MPFSSYIGNSRRSSTGGGTGGWGQSLLPTALSKSKLAINRKPRKRTLVVNFIFANFFVIALTVSLLFFLLTLFHFGVPGPISSRFLTSRSNRIVKPRKNINRRPLNDSNSGAVVDITTKDLYDRIEFLDTDGGPWKQGWRVTYKDDEWEKEKLKIFVVPHSHNDPGWKLTVEEYYQRQSRHILDTIVETLSKDSRRKFIWEEMSYLERWWRDASPNKQEALTKLVKDGQLEIVGGGWVMNDEANSHYFAIIEQIAEGNMWLNDTIGVIPKNSWAIDPFGYSSTMAYLLRRMGFENMLIQRTHYELKKDLAQHKNLEYIWRQSWDAMETTDIFVHMMPFYSYDIPHTCGPEPAICCQFDFARMRGFKYELCPWGKHPVETTLENVQERALKLLDQYRKKSTLYRTNTLLIPLGDDFRYISIDEAEAQFRNYQMLFDHINSNPSLNAEAKFGTLEDYFRTVREEADRVNYSRPGEVGSGQVVGFPSLSGDFFTYADRQQDYWSGYYVSRPFFKAVDRVLEHTLRGAEIMMSFLLGYCHRIQCEKFPTSFTYKLTAARRNLALFQHHDGVTGTAKDYVVQDYGTRMHTSLQDLQIFMSKAIEVLLGIRHEKEKSDQSPSFFEAEQMRSKYDARPVHKPIAAREGNSHTVILFNPSEQTREEVVTVVVNRAEISVLDSNWTCVPSQISPEVQHDDTKLFTGRHRLYWKASIPALGLRTYFIANGNVECEKATPSKLKYASEFDPFPCPPPYSCSKLDNDVTEIRNEHQTLVFDVKNGSLRKIVHRNGSETVVGEEIGMYSSPESGAYLFKPDGEAQPIVQPDGHVVTSEGLLVQEVFSYPKTKWEKSPLSQKTRLYTGGNTLQDQVVEIEYHVELLGNDFDDRELIVRYKTDVDNKKVFYSDLNGFQMSRRETYDKIPLQGNYYPMPSLAFIQGSNGQRFSVHSRQSLGVASLKEGWLEIMLDRRLVRDDGRGLGQGVMDNRAMTVVFHLLAESNISQADPASNTNPRNPSLLSHLIGAHLNYPINTFIAKKPQDISVRVPQYGSFAPLAKPLPCDLHIVNFKVPRPSKYSQQLEEDKPRFALILNRRAWDSAYCHKGRQVNCTSMANEPVNFSDMFKDLAASKVKPTSLNLLQEDMEILGYDDQELPRDSSQPREGRVSISPMEIRAYKLELRPHK.

The tract at residues M1–G21 is disordered. Over M1 to N50 the chain is Cytoplasmic. The chain crosses the membrane as a helical; Signal-anchor span at residues F51–T71. Residues L72–K1173 are Lumenal-facing. A glycan (N-linked (GlcNAc...) asparagine) is linked at N106. The Zn(2+) site is built by H162 and D164. The N-linked (GlcNAc...) asparagine glycan is linked to N262. Residue D276 coordinates Zn(2+). D276 (nucleophile) is an active-site residue. The N-linked (GlcNAc...) asparagine glycan is linked to N467. H564 is a Zn(2+) binding site. Residues N675, N772, N782, N991, N1098, and N1108 are each glycosylated (N-linked (GlcNAc...) asparagine).

This sequence belongs to the glycosyl hydrolase 38 family. In terms of assembly, homodimer; disulfide-linked. Interacts with GALT1. It depends on Zn(2+) as a cofactor. In terms of processing, glycosylated.

It is found in the golgi apparatus membrane. The catalysed reaction is N(4)-{beta-D-GlcNAc-(1-&gt;2)-alpha-D-Man-(1-&gt;3)-[alpha-D-Man-(1-&gt;3)-[alpha-D-Man-(1-&gt;6)]-alpha-D-Man-(1-&gt;6)]-beta-D-Man-(1-&gt;4)-beta-D-GlcNAc-(1-&gt;4)-beta-D-GlcNAc}-L-asparaginyl-[protein] + 2 H2O = 2 alpha-D-mannopyranose + an N(4)-{beta-D-GlcNAc-(1-&gt;2)-alpha-D-Man-(1-&gt;3)-[alpha-D-Man-(1-&gt;6)]-beta-D-Man-(1-&gt;4)-beta-D-GlcNAc-(1-&gt;4)-beta-D-GlcNAc}-L-asparaginyl-[protein]. The protein operates within protein modification; protein glycosylation. With respect to regulation, inhibited by 1 mM Cu(2+) and by the class II alpha-mannosidase inhibitor swainsonine. Its function is as follows. Catalyzes the first committed step in the biosynthesis of complex N-glycans. It controls conversion of high mannose to complex N-glycans; the final hydrolytic step in the N-glycan maturation pathway. Converts GlcNAcMan(5)GlcNAc(2) (Man5Gn) into GlcNAcMan(3)GlcNAc(2) (MGn) by sequential removal of two alpha1,6- and alpha1,3-linked mannose residues from the alpha1,6-mannose branch of the substrate. To a lesser extent, also able to cleave beta1,2-xylosylated Man5Gn-glycopeptide (Man5GnX-GP) and pyridylaminated substrates Man5Gn-PA and Man5GnX-PA, but not active toward Man5-glycopeptide. Required for resistance to salt stress. This Arabidopsis thaliana (Mouse-ear cress) protein is Alpha-mannosidase 2.